We begin with the raw amino-acid sequence, 406 residues long: Terminal uridylyltransferase 7 (406 aa).

Residues 1–15 (MNVAKREFIRGMMAH) constitute a mitochondrion transit peptide. UTP is bound by residues S54 and 64-65 (SD). Positions 65 and 67 each coordinate Mg(2+). UTP-binding positions include 138 to 142 (GVENS), K164, K168, and 181 to 183 (NSF).

This sequence belongs to the DNA polymerase type-B-like family. As to quaternary structure, component of the mitochondrial RNA editing core complex-like (RECC-like), also known as the editosome-like complex; only a small proportion of MEAT1 associates with the complex. Interacts with RNA-editing ligase REL1. Requires Mg(2+) as cofactor.

The protein resides in the mitochondrion matrix. It carries out the reaction RNA(n) + UTP = RNA(n)-3'-uridine ribonucleotide + diphosphate. In terms of biological role, terminal uridylyltransferase which, as part of the mitochondrial RNA editing core-like complex (RECC-like), is involved in the post-transcriptional editing of mitochondrial RNA, a process involving the addition and deletion of uridine (U) nucleotides in the pre-mRNA. Specifically, catalyzes the addition of U to single-stranded RNA with a preference for a 3'-terminal U and adds the number of Us specified by a guide RNA (gRNA) to precleaved double-stranded RNA editing substrates. Essential for insect and bloodstream developmental forms viability. The chain is Terminal uridylyltransferase 7 from Trypanosoma brucei brucei.